We begin with the raw amino-acid sequence, 491 residues long: Cobyric acid synthase (491 aa).

The GATase cobBQ-type domain maps to 253-429 (ARRVAVIRLP…WHGALEGDEL (177 aa)). Catalysis depends on C334, which acts as the Nucleophile. H421 is a catalytic residue.

It belongs to the CobB/CobQ family. CobQ subfamily.

It functions in the pathway cofactor biosynthesis; adenosylcobalamin biosynthesis. Functionally, catalyzes amidations at positions B, D, E, and G on adenosylcobyrinic A,C-diamide. NH(2) groups are provided by glutamine, and one molecule of ATP is hydrogenolyzed for each amidation. The protein is Cobyric acid synthase of Mycolicibacterium gilvum (strain PYR-GCK) (Mycobacterium gilvum (strain PYR-GCK)).